Reading from the N-terminus, the 956-residue chain is Bifunctional glutamine synthetase adenylyltransferase/adenylyl-removing enzyme (956 aa).

Residues 1-441 are adenylyl removase; the sequence is MLPLSTPLLA…IFTQLIGDDS (441 aa). The segment at 450-956 is adenylyl transferase; it reads HVPFKSLWLE…RRSWQQWLGE (507 aa).

It belongs to the GlnE family. Requires Mg(2+) as cofactor.

The catalysed reaction is [glutamine synthetase]-O(4)-(5'-adenylyl)-L-tyrosine + phosphate = [glutamine synthetase]-L-tyrosine + ADP. The enzyme catalyses [glutamine synthetase]-L-tyrosine + ATP = [glutamine synthetase]-O(4)-(5'-adenylyl)-L-tyrosine + diphosphate. Its function is as follows. Involved in the regulation of glutamine synthetase GlnA, a key enzyme in the process to assimilate ammonia. When cellular nitrogen levels are high, the C-terminal adenylyl transferase (AT) inactivates GlnA by covalent transfer of an adenylyl group from ATP to specific tyrosine residue of GlnA, thus reducing its activity. Conversely, when nitrogen levels are low, the N-terminal adenylyl removase (AR) activates GlnA by removing the adenylyl group by phosphorolysis, increasing its activity. The regulatory region of GlnE binds the signal transduction protein PII (GlnB) which indicates the nitrogen status of the cell. The protein is Bifunctional glutamine synthetase adenylyltransferase/adenylyl-removing enzyme of Photorhabdus laumondii subsp. laumondii (strain DSM 15139 / CIP 105565 / TT01) (Photorhabdus luminescens subsp. laumondii).